Here is a 683-residue protein sequence, read N- to C-terminus: MSSESSKKRKPKVIRSDGTPTEGKRNRSDTEQEGKYYSEEAEVDLRDPGRDYELYKYTCQELQRLMAEIQDLKSKGSKDVAIEIEERRIQSCVHFMTLKKLNRLAHIRLKKGRDQTHEAKQKVDAYHLQLQNLLYEVMHLQKEITKCLEFKSKHEEIDLVSLEEFYSEAPPSISKAEITMGDPHQQTLARLDWELEQRKRLAEKYRECLSNKEKILKEIEVKRDYLSSLQPRLNSIMQASLPVQEYLFMPFDQAHKQYETARHLPPPLYVLFVQATAYGQACDKTLSVAIEGSVDEAKALFKPPEDSQDDESDSDAEEEQTTKRRRPTLGVQLDDKRKEMLKRHPLSVLLDLKCKDNSVLHLTFYYLMNLNIMTVKAKVTTAVELITPISAGDLLSPDSVLSCLYPGDHGKKTPNPANQYQFDKVGILTLRDYVLELGHPYLWVQKLGGLHFPKEQPQQTVMPDHSQSASHMETTMKLLKTRVQSRLALHKQFASLEHGIVPVTSDCQDLFPAKVVSRLVKWVIITHEDYMELHFTKDIVEAGLAGDTNLYYLALIERGTAKLQAAVVLNPGYSSIPPVFRLCLNWKGEKTNSNDDNIRAMESEVNVCYKELCGPRPSHQLLTNQLQRLCVLLDVYLETESHDDSFEGPKEFPQEKMCLRLFRGPSRMKPFKYNHPQGFFSHR.

The disordered stretch occupies residues 1–42 (MSSESSKKRKPKVIRSDGTPTEGKRNRSDTEQEGKYYSEEAE). Ser-2 carries the N-acetylserine modification. The interaction with CSF1R stretch occupies residues 2 to 144 (SSESSKKRKP…YEVMHLQKEI (143 aa)). An interaction with THOC7 region spans residues 2–199 (SSESSKKRKP…RLDWELEQRK (198 aa)). Phosphoserine is present on residues Ser-5 and Ser-6. Residues 7–10 (KKRK) carry the Nuclear localization signal motif. A compositionally biased stretch (basic and acidic residues) spans 22–42 (EGKRNRSDTEQEGKYYSEEAE). Residues 81 to 247 (AIEIEERRIQ…QASLPVQEYL (167 aa)) are a coiled coil. Lys-153 is covalently cross-linked (Glycyl lysine isopeptide (Lys-Gly) (interchain with G-Cter in SUMO2)). Tyr-225 is subject to Phosphotyrosine. The segment at 247–683 (LFMPFDQAHK…NHPQGFFSHR (437 aa)) is tandem RWD domains. A disordered region spans residues 301–336 (FKPPEDSQDDESDSDAEEEQTTKRRRPTLGVQLDDK). A compositionally biased stretch (acidic residues) spans 306 to 319 (DSQDDESDSDAEEE). A phosphoserine mark is found at Ser-307, Ser-312, and Ser-314. A Phosphothreonine modification is found at Thr-328.

Belongs to the THOC5 family. Component of the THO subcomplex, which is composed of THOC1, THOC2, THOC3, THOC5, THOC6 and THOC7. The THO subcomplex interacts with DDX39B to form the THO-DDX39B complex which multimerizes into a 28-subunit tetrameric assembly. Component of the transcription/export (TREX) complex at least composed of ALYREF/THOC4, DDX39B, SARNP/CIP29, CHTOP and the THO subcomplex; in the complex interacts with THOC1, THOC2, THOC5, THOC6 and THOC7; forms a coiled-coil dimer with THOC7; together with THOC6 and THOC7, plays a key structural role in the oligomerization of the THO-DDX39B complex. TREX seems to have a dynamic structure involving ATP-dependent remodeling. Interacts (via N-terminus) with the NTF2 domain of NXF1. Interacts with phosphorylated CSF1R. Forms a complex with CEBPB. Interacts with CPSF6; indicative for an association with the cleavage factor Im (CFIm) complex. Interacts with THOC1. Interacts with LUZP4. Interacts with NCBP3. Post-translationally, phosphorylated on tyrosine upon binding to activated CSF1R; which causes a dissociation of the two proteins. Phosphorylation on Ser-5 and/or Ser-6 is required for nuclear export. Phosphorylated on Thr-328 in insulin-stimulated adipocytes. As to expression, ubiquitously expressed, with highest levels in testis, liver and heart.

It localises to the nucleus. Its subcellular location is the cytoplasm. Functionally, component of the THO subcomplex of the TREX complex which is thought to couple mRNA transcription, processing and nuclear export, and which specifically associates with spliced mRNA and not with unspliced pre-mRNA. Plays a key structural role in the oligomerization of the THO-DDX39B complex. TREX is recruited to spliced mRNAs by a transcription-independent mechanism, binds to mRNA upstream of the exon-junction complex (EJC) and is recruited in a splicing- and cap-dependent manner to a region near the 5' end of the mRNA where it functions in mRNA export to the cytoplasm via the TAP/NXF1 pathway. THOC5 in conjunction with ALYREF/THOC4 functions in NXF1-NXT1 mediated nuclear export of HSP70 mRNA; both proteins enhance the RNA binding activity of NXF1 and are required for NXF1 localization to the nuclear rim. Involved in transcription elongation and genome stability. Involved in alternative polyadenylation site choice by recruiting CPSF6 to 5' region of target genes; probably mediates association of the TREX and CFIm complexes. Its function is as follows. Regulates the expression of myeloid transcription factors CEBPA, CEBPB and GAB2 by enhancing the levels of phosphatidylinositol 3,4,5-trisphosphate. May be involved in the differentiation of granulocytes and adipocytes. Essential for hematopoietic primitive cell survival and plays an integral role in monocytic development. This Mus musculus (Mouse) protein is THO complex subunit 5 homolog (Thoc5).